The following is a 513-amino-acid chain: Maturase K (513 aa).

This sequence belongs to the intron maturase 2 family. MatK subfamily.

It localises to the plastid. It is found in the chloroplast. Usually encoded in the trnK tRNA gene intron. Probably assists in splicing its own and other chloroplast group II introns. The sequence is that of Maturase K from Arundo donax (Giant reed).